A 329-amino-acid chain; its full sequence is DNA-directed RNA polymerase subunit alpha (329 aa).

The interval 1 to 231 is alpha N-terminal domain (alpha-NTD); that stretch reads MQTNLLKPKT…EQLAVFAQLE (231 aa). The alpha C-terminal domain (alpha-CTD) stretch occupies residues 249 to 329; sequence FDPILLRPVD…SWPPAGLDKR (81 aa).

The protein belongs to the RNA polymerase alpha chain family. In terms of assembly, homodimer. The RNAP catalytic core consists of 2 alpha, 1 beta, 1 beta' and 1 omega subunit. When a sigma factor is associated with the core the holoenzyme is formed, which can initiate transcription.

The catalysed reaction is RNA(n) + a ribonucleoside 5'-triphosphate = RNA(n+1) + diphosphate. DNA-dependent RNA polymerase catalyzes the transcription of DNA into RNA using the four ribonucleoside triphosphates as substrates. This is DNA-directed RNA polymerase subunit alpha from Polaromonas sp. (strain JS666 / ATCC BAA-500).